A 261-amino-acid polypeptide reads, in one-letter code: Ribonuclease PH (261 aa).

Residues Arg-87 and 125–127 (GTR) contribute to the phosphate site.

Belongs to the RNase PH family. As to quaternary structure, homohexameric ring arranged as a trimer of dimers.

It catalyses the reaction tRNA(n+1) + phosphate = tRNA(n) + a ribonucleoside 5'-diphosphate. In terms of biological role, phosphorolytic 3'-5' exoribonuclease that plays an important role in tRNA 3'-end maturation. Removes nucleotide residues following the 3'-CCA terminus of tRNAs; can also add nucleotides to the ends of RNA molecules by using nucleoside diphosphates as substrates, but this may not be physiologically important. Probably plays a role in initiation of 16S rRNA degradation (leading to ribosome degradation) during starvation. This chain is Ribonuclease PH, found in Caldanaerobacter subterraneus subsp. tengcongensis (strain DSM 15242 / JCM 11007 / NBRC 100824 / MB4) (Thermoanaerobacter tengcongensis).